Reading from the N-terminus, the 327-residue chain is COP9 signalosome complex subunit 6 (327 aa).

An MPN domain is found at 41-174 (VALHPLVILN…VSVFESVIDI (134 aa)). Residues 211–327 (SGENSTVAEH…IGRRMRGLFF (117 aa)) form an interaction with Vpr region.

It belongs to the peptidase M67A family. CSN6 subfamily. In terms of assembly, component of the CSN complex, composed of COPS1/GPS1, COPS2, COPS3, COPS4, COPS5, COPS6, COPS7 (COPS7A or COPS7B), COPS8 and COPS9 isoform 1. In the complex, it probably interacts directly with COPS2, COPS4, COPS5, COPS7 (COPS7A or COPS7B) and COPS9 isoform 1. Interacts with the translation initiation factor EIF3S6. Interacts weakly with RBX1. Directly interacts with COP1 and 14-3-3 protein sigma/SFN. Interacts with ERCC6. As to quaternary structure, (Microbial infection) Interacts with the HIV-1 protein Vpr. In terms of tissue distribution, widely expressed.

The protein resides in the nucleus. It is found in the cytoplasm. The protein localises to the perinuclear region. Functionally, component of the COP9 signalosome complex (CSN), a complex involved in various cellular and developmental processes. The CSN complex is an essential regulator of the ubiquitin (Ubl) conjugation pathway by mediating the deneddylation of the cullin subunits of SCF-type E3 ligase complexes, leading to decrease the Ubl ligase activity of SCF-type complexes such as SCF, CSA or DDB2. The complex is also involved in phosphorylation of p53/TP53, c-jun/JUN, IkappaBalpha/NFKBIA, ITPK1 and IRF8, possibly via its association with CK2 and PKD kinases. CSN-dependent phosphorylation of TP53 and JUN promotes and protects degradation by the Ubl system, respectively. Has some glucocorticoid receptor-responsive activity. Stabilizes COP1 through reducing COP1 auto-ubiquitination and decelerating COP1 turnover rate, hence regulates the ubiquitination of COP1 targets. The polypeptide is COP9 signalosome complex subunit 6 (COPS6) (Homo sapiens (Human)).